A 500-amino-acid chain; its full sequence is Probable cytosol aminopeptidase (500 aa).

Residues Lys-264 and Asp-269 each coordinate Mn(2+). The active site involves Lys-276. 3 residues coordinate Mn(2+): Asp-287, Asp-346, and Glu-348. The active site involves Arg-350.

It belongs to the peptidase M17 family. Mn(2+) is required as a cofactor.

It localises to the cytoplasm. The catalysed reaction is Release of an N-terminal amino acid, Xaa-|-Yaa-, in which Xaa is preferably Leu, but may be other amino acids including Pro although not Arg or Lys, and Yaa may be Pro. Amino acid amides and methyl esters are also readily hydrolyzed, but rates on arylamides are exceedingly low.. The enzyme catalyses Release of an N-terminal amino acid, preferentially leucine, but not glutamic or aspartic acids.. Its function is as follows. Presumably involved in the processing and regular turnover of intracellular proteins. Catalyzes the removal of unsubstituted N-terminal amino acids from various peptides. The chain is Probable cytosol aminopeptidase from Afipia carboxidovorans (strain ATCC 49405 / DSM 1227 / KCTC 32145 / OM5) (Oligotropha carboxidovorans).